Consider the following 131-residue polypeptide: Protein TAP2 (131 aa).

Positions 1–22 are cleaved as a signal peptide; the sequence is MAKSSPTYTVLFLLGLLALSTA. The tract at residues 75–101 is disordered; sequence ARSGGETDVKKMEGSMPDQGKTAGRDQ.

In terms of tissue distribution, tapetum of anthers.

In Antirrhinum majus (Garden snapdragon), this protein is Protein TAP2 (TAP2).